Reading from the N-terminus, the 444-residue chain is Glutamate-1-semialdehyde 2,1-aminomutase (444 aa).

Residue K267 is modified to N6-(pyridoxal phosphate)lysine.

This sequence belongs to the class-III pyridoxal-phosphate-dependent aminotransferase family. HemL subfamily. In terms of assembly, homodimer. The cofactor is pyridoxal 5'-phosphate.

The protein resides in the cytoplasm. The enzyme catalyses (S)-4-amino-5-oxopentanoate = 5-aminolevulinate. It functions in the pathway porphyrin-containing compound metabolism; protoporphyrin-IX biosynthesis; 5-aminolevulinate from L-glutamyl-tRNA(Glu): step 2/2. This is Glutamate-1-semialdehyde 2,1-aminomutase from Xylella fastidiosa (strain M12).